Reading from the N-terminus, the 225-residue chain is DnaA regulatory inactivator Hda (225 aa).

It belongs to the DnaA family. HdA subfamily. In terms of assembly, the active form seems to be an ADP-bound monomer. Forms the RIDA complex (regulatory inactivation of DnaA) of ATP-DnaA, ADP-Hda and the DNA-loaded beta sliding clamp (dnaN).

Its function is as follows. Mediates the interaction of DNA replication initiator protein DnaA with DNA polymerase subunit beta sliding clamp (dnaN). Stimulates hydrolysis of ATP-DnaA to ADP-DnaA, rendering DnaA inactive for reinitiation, a process called regulatory inhibition of DnaA or RIDA. The chain is DnaA regulatory inactivator Hda from Klebsiella pneumoniae (strain 342).